The primary structure comprises 507 residues: 3-octaprenyl-4-hydroxybenzoate carboxy-lyase (507 aa).

Position 177 (N177) interacts with Mn(2+). Residues 180-182 (IYR), 194-196 (RWL), and 199-200 (RG) each bind prenylated FMN. Mn(2+) is bound at residue E243. D302 (proton donor) is an active-site residue.

It belongs to the UbiD family. Homohexamer. Prenylated FMN is required as a cofactor. It depends on Mn(2+) as a cofactor.

The protein resides in the cell membrane. It catalyses the reaction a 4-hydroxy-3-(all-trans-polyprenyl)benzoate + H(+) = a 2-(all-trans-polyprenyl)phenol + CO2. It participates in cofactor biosynthesis; ubiquinone biosynthesis. Its function is as follows. Catalyzes the decarboxylation of 3-octaprenyl-4-hydroxy benzoate to 2-octaprenylphenol, an intermediate step in ubiquinone biosynthesis. The polypeptide is 3-octaprenyl-4-hydroxybenzoate carboxy-lyase (Cupriavidus metallidurans (strain ATCC 43123 / DSM 2839 / NBRC 102507 / CH34) (Ralstonia metallidurans)).